The chain runs to 828 residues: Periplasmic nitrate reductase (828 aa).

A signal peptide (tat-type signal) is located at residues 1-31 (MKLSRRSFMKANAVAAAAAAAGLSVPGVARA). The 57-residue stretch at 39 to 95 (IKWDKAPCRFCGTGCGVLVGTQQGRVVACQGDPDAPVNRGLNCIKGYFLPKIMYGKD) folds into the 4Fe-4S Mo/W bis-MGD-type domain. The [4Fe-4S] cluster site is built by Cys-46, Cys-49, Cys-53, and Cys-81. Mo-bis(molybdopterin guanine dinucleotide) contacts are provided by residues Lys-83, Gln-150, Asn-175, Cys-179, 212–219 (WGANMAEM), 243–247 (STYQH), 262–264 (QSD), Met-372, Gln-376, Asn-482, 508–509 (SD), Lys-531, Asp-558, and 718–727 (TGRVLEHWHT). Phe-794 contributes to the substrate binding site. Mo-bis(molybdopterin guanine dinucleotide) is bound by residues Asn-802 and Lys-819.

This sequence belongs to the prokaryotic molybdopterin-containing oxidoreductase family. NasA/NapA/NarB subfamily. Component of the periplasmic nitrate reductase NapAB complex composed of NapA and NapB. The cofactor is [4Fe-4S] cluster. Mo-bis(molybdopterin guanine dinucleotide) serves as cofactor. Predicted to be exported by the Tat system. The position of the signal peptide cleavage has not been experimentally proven.

It is found in the periplasm. It carries out the reaction 2 Fe(II)-[cytochrome] + nitrate + 2 H(+) = 2 Fe(III)-[cytochrome] + nitrite + H2O. Catalytic subunit of the periplasmic nitrate reductase complex NapAB. Receives electrons from NapB and catalyzes the reduction of nitrate to nitrite. The polypeptide is Periplasmic nitrate reductase (Shigella flexneri serotype 5b (strain 8401)).